We begin with the raw amino-acid sequence, 101 residues long: ATP synthase subunit c (101 aa).

The next 2 membrane-spanning stretches (helical) occupy residues 31–51 and 81–101; these read AFAYLGAGLAMIGVIGVGAGQ and AISETSSIYALLVALILIFVG.

It belongs to the ATPase C chain family. As to quaternary structure, F-type ATPases have 2 components, F(1) - the catalytic core - and F(0) - the membrane proton channel. F(1) has five subunits: alpha(3), beta(3), gamma(1), delta(1), epsilon(1). F(0) has three main subunits: a(1), b(2) and c(10-14). The alpha and beta chains form an alternating ring which encloses part of the gamma chain. F(1) is attached to F(0) by a central stalk formed by the gamma and epsilon chains, while a peripheral stalk is formed by the delta and b chains.

The protein resides in the cell membrane. Its function is as follows. F(1)F(0) ATP synthase produces ATP from ADP in the presence of a proton or sodium gradient. F-type ATPases consist of two structural domains, F(1) containing the extramembraneous catalytic core and F(0) containing the membrane proton channel, linked together by a central stalk and a peripheral stalk. During catalysis, ATP synthesis in the catalytic domain of F(1) is coupled via a rotary mechanism of the central stalk subunits to proton translocation. Key component of the F(0) channel; it plays a direct role in translocation across the membrane. A homomeric c-ring of between 10-14 subunits forms the central stalk rotor element with the F(1) delta and epsilon subunits. The protein is ATP synthase subunit c of Mesomycoplasma hyopneumoniae (strain 232) (Mycoplasma hyopneumoniae).